Reading from the N-terminus, the 223-residue chain is Ribonuclease T (223 aa).

The Exonuclease domain occupies 20–194 (VVIDVETAGF…YDTNQTALLF (175 aa)). Mg(2+)-binding residues include Asp-23, Glu-25, His-181, and Asp-186. His-181 acts as the Proton donor/acceptor in catalysis.

Belongs to the RNase T family. In terms of assembly, homodimer. Requires Mg(2+) as cofactor.

Trims short 3' overhangs of a variety of RNA species, leaving a one or two nucleotide 3' overhang. Responsible for the end-turnover of tRNA: specifically removes the terminal AMP residue from uncharged tRNA (tRNA-C-C-A). Also appears to be involved in tRNA biosynthesis. The sequence is that of Ribonuclease T from Pectobacterium atrosepticum (strain SCRI 1043 / ATCC BAA-672) (Erwinia carotovora subsp. atroseptica).